We begin with the raw amino-acid sequence, 436 residues long: Trigger factor (436 aa).

Residues 161–246 (EDQLNIDFVG…VNSVSEPKLP (86 aa)) enclose the PPIase FKBP-type domain.

This sequence belongs to the FKBP-type PPIase family. Tig subfamily.

It localises to the cytoplasm. The catalysed reaction is [protein]-peptidylproline (omega=180) = [protein]-peptidylproline (omega=0). Involved in protein export. Acts as a chaperone by maintaining the newly synthesized protein in an open conformation. Functions as a peptidyl-prolyl cis-trans isomerase. This chain is Trigger factor, found in Pseudomonas fluorescens (strain SBW25).